We begin with the raw amino-acid sequence, 301 residues long: Sulfate adenylyltransferase subunit 2 (301 aa).

The interval 279–301 (RQGRMIDHDSSGSMEEKKKQGYF) is disordered.

It belongs to the PAPS reductase family. CysD subfamily. Heterodimer composed of CysD, the smaller subunit, and CysN.

The catalysed reaction is sulfate + ATP + H(+) = adenosine 5'-phosphosulfate + diphosphate. It participates in sulfur metabolism; hydrogen sulfide biosynthesis; sulfite from sulfate: step 1/3. In terms of biological role, with CysN forms the ATP sulfurylase (ATPS) that catalyzes the adenylation of sulfate producing adenosine 5'-phosphosulfate (APS) and diphosphate, the first enzymatic step in sulfur assimilation pathway. APS synthesis involves the formation of a high-energy phosphoric-sulfuric acid anhydride bond driven by GTP hydrolysis by CysN coupled to ATP hydrolysis by CysD. In Marinomonas sp. (strain MWYL1), this protein is Sulfate adenylyltransferase subunit 2.